Here is a 33-residue protein sequence, read N- to C-terminus: Cecropin-C (33 aa).

Lys21 bears the 5-hydroxylysine mark.

Monomer. As to expression, hemolymph.

The protein resides in the secreted. In terms of biological role, cecropins have lytic and antibacterial activity against several Gram-positive and Gram-negative bacteria. Also has activity against fungi. The polypeptide is Cecropin-C (Heliothis virescens (Tobacco budworm moth)).